A 259-amino-acid polypeptide reads, in one-letter code: MILPNINPIIFSIGPFSISWYSLSYVVGILLGWFYATKIIEKFKPEITKKHIEDFITYAIIGIIVGGRLGYVLLYNPLKYFANPIEILKTYEGGMSFHGATIGIIISAYLFCQKYKINFLSLTDIITTVVPIGLFLGRIANFINCELYGRITNSSFGIIFPNSDLEPRHPSQLYEAFFEGLILFCILAYAVFRHDTLKKQGLNSGIYLIFYSLFRIIIEMFREPDIQIGFILDSLTMGQILSAPMLLLGSYLICRLNSK.

4 consecutive transmembrane segments (helical) span residues 9-29 (IIFSIGPFSISWYSLSYVVGI), 55-75 (FITYAIIGIIVGGRLGYVLLY), 92-112 (EGGMSFHGATIGIIISAYLFC), and 117-137 (INFLSLTDIITTVVPIGLFLG). R138 serves as a coordination point for a 1,2-diacyl-sn-glycero-3-phospho-(1'-sn-glycerol). 3 helical membrane passes run 172–192 (QLYEAFFEGLILFCILAYAVF), 201–221 (GLNSGIYLIFYSLFRIIIEMF), and 228–248 (IGFILDSLTMGQILSAPMLLL).

The protein belongs to the Lgt family.

The protein resides in the cell inner membrane. It catalyses the reaction L-cysteinyl-[prolipoprotein] + a 1,2-diacyl-sn-glycero-3-phospho-(1'-sn-glycerol) = an S-1,2-diacyl-sn-glyceryl-L-cysteinyl-[prolipoprotein] + sn-glycerol 1-phosphate + H(+). Its pathway is protein modification; lipoprotein biosynthesis (diacylglyceryl transfer). In terms of biological role, catalyzes the transfer of the diacylglyceryl group from phosphatidylglycerol to the sulfhydryl group of the N-terminal cysteine of a prolipoprotein, the first step in the formation of mature lipoproteins. The chain is Phosphatidylglycerol--prolipoprotein diacylglyceryl transferase from Rickettsia typhi (strain ATCC VR-144 / Wilmington).